A 123-amino-acid chain; its full sequence is Large ribosomal subunit protein bL12 (123 aa).

Belongs to the bacterial ribosomal protein bL12 family. In terms of assembly, homodimer. Part of the ribosomal stalk of the 50S ribosomal subunit. Forms a multimeric L10(L12)X complex, where L10 forms an elongated spine to which 2 to 4 L12 dimers bind in a sequential fashion. Binds GTP-bound translation factors.

Forms part of the ribosomal stalk which helps the ribosome interact with GTP-bound translation factors. Is thus essential for accurate translation. The chain is Large ribosomal subunit protein bL12 from Chlorobium phaeovibrioides (strain DSM 265 / 1930) (Prosthecochloris vibrioformis (strain DSM 265)).